Here is a 226-residue protein sequence, read N- to C-terminus: UPF0173 metal-dependent hydrolase GFO_2312 (226 aa).

The protein belongs to the UPF0173 family.

The chain is UPF0173 metal-dependent hydrolase GFO_2312 from Christiangramia forsetii (strain DSM 17595 / CGMCC 1.15422 / KT0803) (Gramella forsetii).